Here is a 156-residue protein sequence, read N- to C-terminus: Large ribosomal subunit protein uL15 (156 aa).

Over residues 1-13 the composition is skewed to basic and acidic residues; the sequence is MKLNEIKDNEGAT. Positions 1–39 are disordered; it reads MKLNEIKDNEGATKNRKRLGRGIGSGSGKTAGRGVKGQK. Gly residues predominate over residues 21 to 35; it reads RGIGSGSGKTAGRGV.

The protein belongs to the universal ribosomal protein uL15 family. In terms of assembly, part of the 50S ribosomal subunit.

Functionally, binds to the 23S rRNA. The sequence is that of Large ribosomal subunit protein uL15 from Rhizobium meliloti (strain 1021) (Ensifer meliloti).